We begin with the raw amino-acid sequence, 384 residues long: MTKPIITFNNVSKTFEDSGTQVLKNINFDLEEGKFYTLLGASGSGKSTILNIMAGLLDASSGDIYLDGERINDLPINKRDIHTVFQNYALFPHMTVFENVAFALKLKKVDKKEIAKRVKETLKMVQLEGYENRSIQKLSGGQRQRVAIARAIINQPRVVLLDEPLSALDLKLRTEMQYELRELQQRLGITFVFVTHDQEEALAMSDWVFVMNEGEIVQSGTPVDIYDEPINHFVANFIGESNIINGTMIEDYLVSFNGKEFESVDGGMRPNEPVEVVIRPEDLQITLPEEGKLQVKVDTQLFRGVHYEIIAYDELGNEWMIHSTRKAIEGEVIGLDFTPEDLHIMRLNETEEEFDARIEEYVEMDESEDGLINAIEEERNEENL.

The ABC transporter domain occupies 6–238; the sequence is ITFNNVSKTF…PINHFVANFI (233 aa). Position 40–47 (40–47) interacts with ATP; that stretch reads GASGSGKS.

Belongs to the ABC transporter superfamily. Spermidine/putrescine importer (TC 3.A.1.11.1) family. As to quaternary structure, the complex is composed of two ATP-binding proteins (PotA), two transmembrane proteins (PotB and PotC) and a solute-binding protein (PotD).

It is found in the cell membrane. It catalyses the reaction ATP + H2O + polyamine-[polyamine-binding protein]Side 1 = ADP + phosphate + polyamineSide 2 + [polyamine-binding protein]Side 1.. In terms of biological role, part of the ABC transporter complex PotABCD involved in spermidine/putrescine import. Responsible for energy coupling to the transport system. This Streptococcus pyogenes serotype M6 (strain ATCC BAA-946 / MGAS10394) protein is Spermidine/putrescine import ATP-binding protein PotA.